The primary structure comprises 377 residues: Putative holocytochrome-c synthase (377 aa).

Disordered regions lie at residues 1-29 and 111-136; these read MTSS…SNEA and QNSE…KPAG. The span at 7–22 shows a compositional bias: basic and acidic residues; it reads TTDHPRTGKCPIDHSK. HRM repeat units follow at residues 114 to 119 and 124 to 129; these read EATPAV and TCPMSN.

Belongs to the cytochrome c-type heme lyase family.

Its subcellular location is the mitochondrion inner membrane. It is found in the mitochondrion intermembrane space. It carries out the reaction holo-[cytochrome c] = apo-[cytochrome c] + heme b. Functionally, lyase that catalyzes the covalent linking of the heme group to the cytochrome C apoprotein to produce the mature functional cytochrome. The chain is Putative holocytochrome-c synthase from Schizosaccharomyces pombe (strain 972 / ATCC 24843) (Fission yeast).